The following is a 157-amino-acid chain: ADP-ribosylation factor-like protein 2-binding protein (157 aa).

Belongs to the ARL2BP family.

The protein resides in the cytoplasm. The protein localises to the mitochondrion intermembrane space. Its subcellular location is the cytoskeleton. It localises to the microtubule organizing center. It is found in the centrosome. The protein resides in the nucleus. The protein localises to the spindle. Its subcellular location is the cilium basal body. Plays a role as an effector of the ADP-ribosylation factor-like protein 2, ARL2. The protein is ADP-ribosylation factor-like protein 2-binding protein (arl2bp) of Xenopus tropicalis (Western clawed frog).